Reading from the N-terminus, the 574-residue chain is 5'-nucleotidase (574 aa).

The signal sequence occupies residues 1-26; the sequence is MCPRAARAPATLLLALGAVLWPAAGA. Zn(2+) is bound by residues aspartate 36 and histidine 38. A disulfide bridge connects residues cysteine 51 and cysteine 57. An N-linked (GlcNAc...) asparagine glycan is attached at asparagine 53. Aspartate 85, asparagine 117, histidine 220, and histidine 243 together coordinate Zn(2+). N-linked (GlcNAc...) asparagine glycosylation is found at asparagine 311 and asparagine 333. 2 disulfide bridges follow: cysteine 353–cysteine 358 and cysteine 365–cysteine 387. Arginine 354 contributes to the AMP binding site. IMP is bound at residue arginine 354. Residues asparagine 390 and arginine 395 each contribute to the AMP site. 2 residues coordinate IMP: asparagine 390 and arginine 395. Asparagine 403 carries N-linked (GlcNAc...) asparagine glycosylation. Phenylalanine 417 provides a ligand contact to AMP. Phenylalanine 417 serves as a coordination point for IMP. A disulfide bond links cysteine 476 and cysteine 479. Residues phenylalanine 500 and aspartate 506 each contribute to the AMP site. Residues phenylalanine 500 and aspartate 506 each coordinate IMP. Serine 549 is lipidated: GPI-anchor amidated serine. Positions 550 to 574 are cleaved as a propeptide — removed in mature form; sequence TGSHCHGSFSLIFLSLWAVIFVLYQ.

Belongs to the 5'-nucleotidase family. Homodimer. Zn(2+) serves as cofactor.

The protein resides in the cell membrane. The enzyme catalyses a ribonucleoside 5'-phosphate + H2O = a ribonucleoside + phosphate. The catalysed reaction is a 2'-deoxyribonucleoside 5'-phosphate + H2O = a 2'-deoxyribonucleoside + phosphate. It catalyses the reaction dTMP + H2O = thymidine + phosphate. It carries out the reaction CMP + H2O = cytidine + phosphate. The enzyme catalyses IMP + H2O = inosine + phosphate. The catalysed reaction is AMP + H2O = adenosine + phosphate. It catalyses the reaction GMP + H2O = guanosine + phosphate. It carries out the reaction UMP + H2O = uridine + phosphate. The enzyme catalyses dAMP + H2O = 2'-deoxyadenosine + phosphate. The catalysed reaction is dCMP + H2O = 2'-deoxycytidine + phosphate. With respect to regulation, inhibited by adenosine 5'-(alpha,beta-methylene)-diphosphate (AMPCP). Its function is as follows. Catalyzes the hydrolysis of nucleotide monophosphates, releasing inorganic phosphate and the corresponding nucleoside, with AMP being the preferred substrate. Shows a preference for ribonucleotide monophosphates over their equivalent deoxyribose forms. Other substrates include IMP, UMP, GMP, CMP, dAMP, dCMP, dTMP, NAD and NMN. This chain is 5'-nucleotidase (NT5E), found in Homo sapiens (Human).